The primary structure comprises 198 residues: V-type ATP synthase subunit E (198 aa).

Belongs to the V-ATPase E subunit family.

Its function is as follows. Produces ATP from ADP in the presence of a proton gradient across the membrane. This Clostridium novyi (strain NT) protein is V-type ATP synthase subunit E.